Here is a 357-residue protein sequence, read N- to C-terminus: Gas vesicle ATPase GvpN (357 aa).

Positions 22 to 36 (ATSASKNGGRTTPSA) are enriched in polar residues. The segment at 22-43 (ATSASKNGGRTTPSALTPRPRS) is disordered. 72–79 (GPAGTGKT) is a binding site for ATP.

It belongs to the CbbQ/NirQ/NorQ/GpvN family. As to quaternary structure, forms homodimers, probably interacts with other GV proteins including GvpA.

It is found in the gas vesicle. Its subcellular location is the cytoplasm. It catalyses the reaction ATP + H2O = ADP + phosphate + H(+). In terms of biological role, an ATPase that functions in gas vesicle formation. A minor component of the gas vesicle, also found in soluble extracts. Gas vesicles (GV) are hollow, gas filled proteinaceous nanostructures. During planktonic growth they allow positioning of the organism at a favorable depth for light or nutrient acquisition. The protein is Gas vesicle ATPase GvpN of Ancylobacter aquaticus.